The sequence spans 173 residues: Dual-action ribosomal maturation protein DarP (173 aa).

The protein belongs to the DarP family.

Its subcellular location is the cytoplasm. Member of a network of 50S ribosomal subunit biogenesis factors which assembles along the 30S-50S interface, preventing incorrect 23S rRNA structures from forming. Promotes peptidyl transferase center (PTC) maturation. The chain is Dual-action ribosomal maturation protein DarP from Pseudomonas syringae pv. tomato (strain ATCC BAA-871 / DC3000).